Reading from the N-terminus, the 126-residue chain is Phosphoribosyl-AMP cyclohydrolase (126 aa).

Position 76 (Asp76) interacts with Mg(2+). Cys77 is a Zn(2+) binding site. Residues Asp78 and Asp80 each coordinate Mg(2+). Residues Cys94 and Cys101 each contribute to the Zn(2+) site.

The protein belongs to the PRA-CH family. As to quaternary structure, homodimer. Mg(2+) serves as cofactor. Zn(2+) is required as a cofactor.

It localises to the cytoplasm. The catalysed reaction is 1-(5-phospho-beta-D-ribosyl)-5'-AMP + H2O = 1-(5-phospho-beta-D-ribosyl)-5-[(5-phospho-beta-D-ribosylamino)methylideneamino]imidazole-4-carboxamide. The protein operates within amino-acid biosynthesis; L-histidine biosynthesis; L-histidine from 5-phospho-alpha-D-ribose 1-diphosphate: step 3/9. Catalyzes the hydrolysis of the adenine ring of phosphoribosyl-AMP. The sequence is that of Phosphoribosyl-AMP cyclohydrolase from Nitratidesulfovibrio vulgaris (strain ATCC 29579 / DSM 644 / CCUG 34227 / NCIMB 8303 / VKM B-1760 / Hildenborough) (Desulfovibrio vulgaris).